The primary structure comprises 140 residues: Large ribosomal subunit protein uL11 (140 aa).

The protein belongs to the universal ribosomal protein uL11 family. Part of the ribosomal stalk of the 50S ribosomal subunit. Interacts with L10 and the large rRNA to form the base of the stalk. L10 forms an elongated spine to which L12 dimers bind in a sequential fashion forming a multimeric L10(L12)X complex. Post-translationally, one or more lysine residues are methylated.

Functionally, forms part of the ribosomal stalk which helps the ribosome interact with GTP-bound translation factors. This Staphylococcus carnosus (strain TM300) protein is Large ribosomal subunit protein uL11.